A 284-amino-acid chain; its full sequence is Bifunctional protein FolD (284 aa).

NADP(+)-binding positions include 163–165 (GAS), Ile188, and Ile229.

It belongs to the tetrahydrofolate dehydrogenase/cyclohydrolase family. Homodimer.

The enzyme catalyses (6R)-5,10-methylene-5,6,7,8-tetrahydrofolate + NADP(+) = (6R)-5,10-methenyltetrahydrofolate + NADPH. It catalyses the reaction (6R)-5,10-methenyltetrahydrofolate + H2O = (6R)-10-formyltetrahydrofolate + H(+). The protein operates within one-carbon metabolism; tetrahydrofolate interconversion. Its function is as follows. Catalyzes the oxidation of 5,10-methylenetetrahydrofolate to 5,10-methenyltetrahydrofolate and then the hydrolysis of 5,10-methenyltetrahydrofolate to 10-formyltetrahydrofolate. The sequence is that of Bifunctional protein FolD from Nautilia profundicola (strain ATCC BAA-1463 / DSM 18972 / AmH).